The chain runs to 373 residues: Alpha-N-acetylgalactosaminide alpha-2,6-sialyltransferase 2 (373 aa).

Residues 1-6 (MDLPRR) lie on the Cytoplasmic side of the membrane. The helical; Signal-anchor for type II membrane protein transmembrane segment at 7-27 (WLFRMLLLVATSSGILLMLYS) threads the bilayer. Over 28–373 (SAGQQSPETQ…NAGILWLYQR (346 aa)) the chain is Lumenal. Disulfide bonds link Cys-65-Cys-147 and Cys-150-Cys-316. An N-linked (GlcNAc...) asparagine glycan is attached at Asn-103. Residue Asn-155 coordinates CMP-N-acetyl-beta-neuraminate. An N-linked (GlcNAc...) asparagine glycan is attached at Asn-160. CMP-N-acetyl-beta-neuraminate contacts are provided by Asn-178, Ser-303, and His-335.

It belongs to the glycosyltransferase 29 family. In terms of tissue distribution, highly expressed in lactating mammary gland and adult testis. Lower levels in kidney.

It localises to the golgi apparatus membrane. It carries out the reaction a beta-D-galactosyl-(1-&gt;3)-N-acetyl-alpha-D-galactosaminyl derivative + CMP-N-acetyl-beta-neuraminate = a beta-D-galactosyl-(1-&gt;3)-[N-acetyl-alpha-neuraminyl-(2-&gt;6)]-N-acetyl-alpha-D-galactosaminyl derivative + CMP + H(+). The catalysed reaction is a 3-O-[N-acetyl-alpha-D-galactosaminyl]-L-threonyl-[protein] + CMP-N-acetyl-beta-neuraminate = a 3-O-[N-acetyl-alpha-neuraminosyl-(2-&gt;6)-N-acetyl-alpha-D-galactosaminyl]-L-threonyl-[protein] + CMP + H(+). The enzyme catalyses a 3-O-[N-acetyl-alpha-neuraminyl-(2-&gt;3)-beta-D-galactosyl-(1-&gt;3)-N-acetyl-alpha-D-galactosaminyl]-L-threonyl-[protein] + CMP-N-acetyl-beta-neuraminate = a 3-O-{alpha-Neu5Ac-(2-&gt;3)-beta-D-Gal-(1-&gt;3)-[alpha-Neu5Ac-(2-&gt;6)]-alpha-D-GalNAc}-L-threonyl-[protein] + CMP + H(+). It participates in protein modification; protein glycosylation. In terms of biological role, catalyzes the transfer of N-acetylneuraminyl groups onto glycan chains in glycoproteins. Conjugates sialic acid with an alpha-2-6 linkage to N-acetylgalactosamine (GalNAc) glycan chains linked to serine or threonine in glycoproteins. Sialylates alphaGalNAc- and Galbeta1-&gt;3GalNAc-O-Ser/Thr epitopes also known as Tn and T antigens. The chain is Alpha-N-acetylgalactosaminide alpha-2,6-sialyltransferase 2 (St6galnac2) from Mus musculus (Mouse).